A 208-amino-acid polypeptide reads, in one-letter code: Small ribosomal subunit protein uS4 (208 aa).

The tract at residues 29 to 48 is disordered; sequence MERRPYGPGQHGRARRKQDS. The 61-residue stretch at 95 to 155 folds into the S4 RNA-binding domain; it reads QRLDALVLRA…ERSEKMVPFQ (61 aa).

The protein belongs to the universal ribosomal protein uS4 family. As to quaternary structure, part of the 30S ribosomal subunit. Contacts protein S5. The interaction surface between S4 and S5 is involved in control of translational fidelity.

One of the primary rRNA binding proteins, it binds directly to 16S rRNA where it nucleates assembly of the body of the 30S subunit. Its function is as follows. With S5 and S12 plays an important role in translational accuracy. This chain is Small ribosomal subunit protein uS4, found in Micrococcus luteus (strain ATCC 4698 / DSM 20030 / JCM 1464 / CCM 169 / CCUG 5858 / IAM 1056 / NBRC 3333 / NCIMB 9278 / NCTC 2665 / VKM Ac-2230) (Micrococcus lysodeikticus).